Here is a 424-residue protein sequence, read N- to C-terminus: Serine--tRNA ligase (424 aa).

Residue Thr230 to Glu232 participates in L-serine binding. ATP is bound at residue Arg261 to Glu263. Residue Glu284 participates in L-serine binding. Glu348–Ser351 contacts ATP. Ser384 contacts L-serine.

The protein belongs to the class-II aminoacyl-tRNA synthetase family. Type-1 seryl-tRNA synthetase subfamily. As to quaternary structure, homodimer. The tRNA molecule binds across the dimer.

Its subcellular location is the cytoplasm. The enzyme catalyses tRNA(Ser) + L-serine + ATP = L-seryl-tRNA(Ser) + AMP + diphosphate + H(+). It catalyses the reaction tRNA(Sec) + L-serine + ATP = L-seryl-tRNA(Sec) + AMP + diphosphate + H(+). It participates in aminoacyl-tRNA biosynthesis; selenocysteinyl-tRNA(Sec) biosynthesis; L-seryl-tRNA(Sec) from L-serine and tRNA(Sec): step 1/1. Functionally, catalyzes the attachment of serine to tRNA(Ser). Is also able to aminoacylate tRNA(Sec) with serine, to form the misacylated tRNA L-seryl-tRNA(Sec), which will be further converted into selenocysteinyl-tRNA(Sec). In Streptococcus pneumoniae (strain ATCC 700669 / Spain 23F-1), this protein is Serine--tRNA ligase.